The primary structure comprises 101 residues: Small ribosomal subunit protein uS14 (101 aa).

This sequence belongs to the universal ribosomal protein uS14 family. As to quaternary structure, part of the 30S ribosomal subunit. Contacts proteins S3 and S10.

Binds 16S rRNA, required for the assembly of 30S particles and may also be responsible for determining the conformation of the 16S rRNA at the A site. This chain is Small ribosomal subunit protein uS14, found in Ehrlichia chaffeensis (strain ATCC CRL-10679 / Arkansas).